A 208-amino-acid chain; its full sequence is Protein IncB (208 aa).

This protein is thought to be cis acting and to contain the putative attachment site on the DNA for the cellular partition apparatus. The sequence is that of Protein IncB (incB) from Escherichia coli.